We begin with the raw amino-acid sequence, 48 residues long: Keratin-associated protein 22-1 (48 aa).

As to quaternary structure, interacts with hair keratins.

In the hair cortex, hair keratin intermediate filaments are embedded in an interfilamentous matrix, consisting of hair keratin-associated proteins (KRTAP), which are essential for the formation of a rigid and resistant hair shaft through their extensive disulfide bond cross-linking with abundant cysteine residues of hair keratins. The matrix proteins include the high-sulfur and high-glycine-tyrosine keratins. The polypeptide is Keratin-associated protein 22-1 (KRTAP22-1) (Homo sapiens (Human)).